We begin with the raw amino-acid sequence, 113 residues long: Nucleoid-associated protein SAV_4556 (113 aa).

It belongs to the YbaB/EbfC family. As to quaternary structure, homodimer.

Its subcellular location is the cytoplasm. The protein localises to the nucleoid. Functionally, binds to DNA and alters its conformation. May be involved in regulation of gene expression, nucleoid organization and DNA protection. The protein is Nucleoid-associated protein SAV_4556 of Streptomyces avermitilis (strain ATCC 31267 / DSM 46492 / JCM 5070 / NBRC 14893 / NCIMB 12804 / NRRL 8165 / MA-4680).